We begin with the raw amino-acid sequence, 288 residues long: tRNA-cytidine(32) 2-sulfurtransferase (288 aa).

The PP-loop motif signature appears at 70 to 75 (SGGKDS). Positions 145, 148, and 236 each coordinate [4Fe-4S] cluster.

The protein belongs to the TtcA family. Homodimer. Mg(2+) is required as a cofactor. It depends on [4Fe-4S] cluster as a cofactor.

It is found in the cytoplasm. The enzyme catalyses cytidine(32) in tRNA + S-sulfanyl-L-cysteinyl-[cysteine desulfurase] + AH2 + ATP = 2-thiocytidine(32) in tRNA + L-cysteinyl-[cysteine desulfurase] + A + AMP + diphosphate + H(+). It participates in tRNA modification. Catalyzes the ATP-dependent 2-thiolation of cytidine in position 32 of tRNA, to form 2-thiocytidine (s(2)C32). The sulfur atoms are provided by the cysteine/cysteine desulfurase (IscS) system. The polypeptide is tRNA-cytidine(32) 2-sulfurtransferase (Bartonella tribocorum (strain CIP 105476 / IBS 506)).